Consider the following 246-residue polypeptide: MTILFLTMVISYFSCMKAAPMKEASVRGHGSLAYPGLRTHGTLESLTGPNAGSRGLTSLADTFEHVIEELLDEDQDIQPSEENKDADLYTSRVMLSSQVPLEPPLLFLLEEYKNYLDAANMSMRVRRHSDPARRGELSVCDSTSEWVTAAEKKTAVDMSGATVTVLEKVPVPKGQLKQYFYETKCNPKGYTKEGCRGIDKRHWNSQCRTTQSYVRALTMDNKKRVGWRFIRIDTSCVCTLTIKRGR.

The first 18 residues, 1-18 (MTILFLTMVISYFSCMKA), serve as a signal peptide directing secretion. A propeptide spanning residues 19-127 (APMKEASVRG…AANMSMRVRR (109 aa)) is cleaved from the precursor. The N-linked (GlcNAc...) asparagine glycan is linked to Asn-120. 3 cysteine pairs are disulfide-bonded: Cys-140–Cys-207, Cys-185–Cys-236, and Cys-195–Cys-238.

Belongs to the NGF-beta family.

The protein localises to the secreted. Its function is as follows. Important signaling molecule that activates signaling cascades downstream of NTRK2. During development, promotes the survival and differentiation of selected neuronal populations of the peripheral and central nervous systems. Participates in axonal growth, pathfinding and in the modulation of dendritic growth and morphology. Major regulator of synaptic transmission and plasticity at adult synapses in many regions of the CNS. The versatility of BDNF is emphasized by its contribution to a range of adaptive neuronal responses including long-term potentiation (LTP), long-term depression (LTD), certain forms of short-term synaptic plasticity, as well as homeostatic regulation of intrinsic neuronal excitability. The protein is Neurotrophic factor BDNF precursor form (BDNF) of Gallus gallus (Chicken).